The sequence spans 427 residues: Gamma-glutamyl phosphate reductase (427 aa).

This sequence belongs to the gamma-glutamyl phosphate reductase family.

It is found in the cytoplasm. The enzyme catalyses L-glutamate 5-semialdehyde + phosphate + NADP(+) = L-glutamyl 5-phosphate + NADPH + H(+). It functions in the pathway amino-acid biosynthesis; L-proline biosynthesis; L-glutamate 5-semialdehyde from L-glutamate: step 2/2. Its function is as follows. Catalyzes the NADPH-dependent reduction of L-glutamate 5-phosphate into L-glutamate 5-semialdehyde and phosphate. The product spontaneously undergoes cyclization to form 1-pyrroline-5-carboxylate. The protein is Gamma-glutamyl phosphate reductase of Anaeromyxobacter dehalogenans (strain 2CP-1 / ATCC BAA-258).